Reading from the N-terminus, the 603-residue chain is Aspartate--tRNA(Asp/Asn) ligase (603 aa).

Glu187 lines the L-aspartate pocket. The tract at residues 211–214 (QQFK) is aspartate. Arg233 and His461 together coordinate L-aspartate. Residue 233 to 235 (RDE) coordinates ATP. Residue Glu495 participates in ATP binding. Arg502 serves as a coordination point for L-aspartate. Position 547-550 (547-550 (GLDR)) interacts with ATP.

This sequence belongs to the class-II aminoacyl-tRNA synthetase family. Type 1 subfamily. In terms of assembly, homodimer.

The protein localises to the cytoplasm. The catalysed reaction is tRNA(Asx) + L-aspartate + ATP = L-aspartyl-tRNA(Asx) + AMP + diphosphate. Its function is as follows. Aspartyl-tRNA synthetase with relaxed tRNA specificity since it is able to aspartylate not only its cognate tRNA(Asp) but also tRNA(Asn). Reaction proceeds in two steps: L-aspartate is first activated by ATP to form Asp-AMP and then transferred to the acceptor end of tRNA(Asp/Asn). The polypeptide is Aspartate--tRNA(Asp/Asn) ligase (Chlorobaculum parvum (strain DSM 263 / NCIMB 8327) (Chlorobium vibrioforme subsp. thiosulfatophilum)).